The chain runs to 361 residues: tRNA/tmRNA (uracil-C(5))-methyltransferase (361 aa).

S-adenosyl-L-methionine contacts are provided by glutamine 185, tyrosine 213, asparagine 218, glutamate 234, and aspartate 294. Catalysis depends on cysteine 319, which acts as the Nucleophile. The Proton acceptor role is filled by glutamate 353.

The protein belongs to the class I-like SAM-binding methyltransferase superfamily. RNA M5U methyltransferase family. TrmA subfamily.

It catalyses the reaction uridine(54) in tRNA + S-adenosyl-L-methionine = 5-methyluridine(54) in tRNA + S-adenosyl-L-homocysteine + H(+). The catalysed reaction is uridine(341) in tmRNA + S-adenosyl-L-methionine = 5-methyluridine(341) in tmRNA + S-adenosyl-L-homocysteine + H(+). Its function is as follows. Dual-specificity methyltransferase that catalyzes the formation of 5-methyluridine at position 54 (m5U54) in all tRNAs, and that of position 341 (m5U341) in tmRNA (transfer-mRNA). In Pseudomonas putida (strain ATCC 700007 / DSM 6899 / JCM 31910 / BCRC 17059 / LMG 24140 / F1), this protein is tRNA/tmRNA (uracil-C(5))-methyltransferase.